We begin with the raw amino-acid sequence, 360 residues long: Peptide chain release factor 1 (360 aa).

Q235 bears the N5-methylglutamine mark. A compositionally biased stretch (basic and acidic residues) spans 280–293 (DKQSHEQQAKEAAT). Residues 280–300 (DKQSHEQQAKEAATRKSLIGS) form a disordered region.

Belongs to the prokaryotic/mitochondrial release factor family. In terms of processing, methylated by PrmC. Methylation increases the termination efficiency of RF1.

It is found in the cytoplasm. Peptide chain release factor 1 directs the termination of translation in response to the peptide chain termination codons UAG and UAA. The sequence is that of Peptide chain release factor 1 from Paraburkholderia phytofirmans (strain DSM 17436 / LMG 22146 / PsJN) (Burkholderia phytofirmans).